A 145-amino-acid polypeptide reads, in one-letter code: D-aminoacyl-tRNA deacylase (145 aa).

The Gly-cisPro motif, important for rejection of L-amino acids motif lies at glycine 137–proline 138.

Belongs to the DTD family. Homodimer.

It is found in the cytoplasm. The catalysed reaction is glycyl-tRNA(Ala) + H2O = tRNA(Ala) + glycine + H(+). The enzyme catalyses a D-aminoacyl-tRNA + H2O = a tRNA + a D-alpha-amino acid + H(+). An aminoacyl-tRNA editing enzyme that deacylates mischarged D-aminoacyl-tRNAs. Also deacylates mischarged glycyl-tRNA(Ala), protecting cells against glycine mischarging by AlaRS. Acts via tRNA-based rather than protein-based catalysis; rejects L-amino acids rather than detecting D-amino acids in the active site. By recycling D-aminoacyl-tRNA to D-amino acids and free tRNA molecules, this enzyme counteracts the toxicity associated with the formation of D-aminoacyl-tRNA entities in vivo and helps enforce protein L-homochirality. The sequence is that of D-aminoacyl-tRNA deacylase from Ectopseudomonas mendocina (strain ymp) (Pseudomonas mendocina).